Here is an 863-residue protein sequence, read N- to C-terminus: Leucine--tRNA ligase (863 aa).

A 'HIGH' region motif is present at residues 40–51; that stretch reads PYPSGAGLHVGH. Positions 635-639 match the 'KMSKS' region motif; sequence KMSKS. K638 serves as a coordination point for ATP.

It belongs to the class-I aminoacyl-tRNA synthetase family.

It is found in the cytoplasm. It catalyses the reaction tRNA(Leu) + L-leucine + ATP = L-leucyl-tRNA(Leu) + AMP + diphosphate. The sequence is that of Leucine--tRNA ligase from Leptospira interrogans serogroup Icterohaemorrhagiae serovar copenhageni (strain Fiocruz L1-130).